We begin with the raw amino-acid sequence, 329 residues long: MTPVALDIAIHLAKIALIFFVVLTLAAYLVFAERRILAWIQDRKGPNRVGPFGLLQPLADLIKLLTKEDFRPAGADKWLFYLAPAMAAIPAILTFAVIPFGAPLTLFGREVPLQVADLNVGLLFFLALSSIAVYGVALGGWASNSKYALLGSIRGLAQLISYELSMGLSLVPTVMLAGSLRLSDIVAAQEGIWFIVYQPLAFVIFLISIAAECKRIPFDIPEAEGELVAGFHTEYSGMRFGLFFVGEYINIIVLGGLATTFFLGGWHGPWLPPFVWFSAKTLAFAFFFIWMRGTLPRLRYDQLMHLGWKVLTPLALVNILVTGWILMLR.

8 consecutive transmembrane segments (helical) span residues leucine 12–alanine 32, tryptophan 78–isoleucine 98, valine 120–glycine 140, leucine 159–serine 179, glycine 191–alanine 211, leucine 242–phenylalanine 262, tryptophan 270–tryptophan 290, and tryptophan 308–leucine 328.

It belongs to the complex I subunit 1 family. In terms of assembly, NDH-1 is composed of 14 different subunits. Subunits NuoA, H, J, K, L, M, N constitute the membrane sector of the complex.

It is found in the cell inner membrane. The catalysed reaction is a quinone + NADH + 5 H(+)(in) = a quinol + NAD(+) + 4 H(+)(out). Functionally, NDH-1 shuttles electrons from NADH, via FMN and iron-sulfur (Fe-S) centers, to quinones in the respiratory chain. The immediate electron acceptor for the enzyme in this species is believed to be ubiquinone. Couples the redox reaction to proton translocation (for every two electrons transferred, four hydrogen ions are translocated across the cytoplasmic membrane), and thus conserves the redox energy in a proton gradient. This subunit may bind ubiquinone. This Geobacter metallireducens (strain ATCC 53774 / DSM 7210 / GS-15) protein is NADH-quinone oxidoreductase subunit H 1.